Consider the following 289-residue polypeptide: Thioredoxin-like protein 1 (289 aa).

A Thioredoxin domain is found at 2-109 (VGVKPVGSDP…EEKIKQHLEN (108 aa)). A disulfide bridge links Cys-34 with Cys-37. Ser-113 carries the phosphoserine modification. The PITH domain occupies 115 to 285 (EDTDIPKGYM…NDFKRVVGKK (171 aa)).

Component of the 19S regulatory cap of the 26S proteasome. Interacts with PSMD14/RPN11. Interacts with, and reduces EEF1A1. In terms of tissue distribution, ubiquitous.

The protein localises to the cytoplasm. The protein resides in the nucleus. Functionally, active thioredoxin with a redox potential of about -250 mV. This chain is Thioredoxin-like protein 1 (TXNL1), found in Homo sapiens (Human).